The primary structure comprises 369 residues: Putative 2-aminoethylphosphonate import ATP-binding protein PhnT (369 aa).

An ABC transporter domain is found at 19-250 (IVLDSLRVAY…PPNRFAAEFL (232 aa)). 51–58 (GPSGSGKT) is an ATP binding site.

Belongs to the ABC transporter superfamily. 2-aminoethylphosphonate importer (TC 3.A.1.11.5) family.

It localises to the cell inner membrane. Functionally, probably part of the PhnSTUV complex (TC 3.A.1.11.5) involved in 2-aminoethylphosphonate import. Probably responsible for energy coupling to the transport system. This chain is Putative 2-aminoethylphosphonate import ATP-binding protein PhnT (phnT), found in Salmonella paratyphi A (strain ATCC 9150 / SARB42).